The sequence spans 129 residues: Small ribosomal subunit protein uS11 (129 aa).

The protein belongs to the universal ribosomal protein uS11 family. As to quaternary structure, part of the 30S ribosomal subunit. Interacts with proteins S7 and S18. Binds to IF-3.

In terms of biological role, located on the platform of the 30S subunit, it bridges several disparate RNA helices of the 16S rRNA. Forms part of the Shine-Dalgarno cleft in the 70S ribosome. This chain is Small ribosomal subunit protein uS11, found in Histophilus somni (strain 129Pt) (Haemophilus somnus).